Here is a 208-residue protein sequence, read N- to C-terminus: MAKYTDAKCRQCRREGTKLFLKGDRCFTDKCAFDRRPYAPGQHGRARKKVSDYAVQLREKQKVRRMYGILEQQFHAYFTKADMAKGVTGANLLSLLERRLDNVIYRLGFANSRNQARQLVRHGIFTLNGRKVNIPSLQVRIGDTIEVPEKSRKIPVLAEAQEVIARRGCPAWLEADGANFRGVVKALPQREDIQFPINEHLIVELYSK.

The 64-residue stretch at 98–161 (RRLDNVIYRL…RKIPVLAEAQ (64 aa)) folds into the S4 RNA-binding domain.

Belongs to the universal ribosomal protein uS4 family. As to quaternary structure, part of the 30S ribosomal subunit. Contacts protein S5. The interaction surface between S4 and S5 is involved in control of translational fidelity.

Its function is as follows. One of the primary rRNA binding proteins, it binds directly to 16S rRNA where it nucleates assembly of the body of the 30S subunit. In terms of biological role, with S5 and S12 plays an important role in translational accuracy. This Nitratidesulfovibrio vulgaris (strain ATCC 29579 / DSM 644 / CCUG 34227 / NCIMB 8303 / VKM B-1760 / Hildenborough) (Desulfovibrio vulgaris) protein is Small ribosomal subunit protein uS4.